A 988-amino-acid polypeptide reads, in one-letter code: MGFMSAKLFPSCESMCVCCPALRPSSRRPVKRYKKLLAEIFPKTPDGLPNERKIMKLCEYAAKNPLRIPKIAKFLEQRSHKELRSAHVNFIKIITEAYSKLLFICKEQMAYFAISLVNVLTELLESKQENIHILGCQTLAKFIYSQVDNTYARNIESLVRKVCVLSRQQGVEHSLLRAASLQCLSAMIWFMKEHSYIFVDFDEIVQSVLENYRVEESAAGDEERHAPQHNWVDEIVRREGRAGLGGGNDVNCNSTAIRLRSARDSSALTREERESPEVWAHICVQKLAELAKESTTMRRILDPMLSYFDKKKQWAPRQGLALLVLSDMSYLEKSSGNEQLILTSVIRHLDHKNVLYDPQIKSDMIQTATLLARQLRSRGIAAELVVAGDLCRHLRKTLEAMESASIEELNLNESLQNFLQDCLLEVVTGINDVRPLYDMMAITLENLPSMPVVARASIGSLLILSHIISLTSMSLNAPMLFPEALLQQILKSMVHPDVDTRVGAHHMFSAVIVQGPSRQRSESDFLYETKKWQSRTTSVFASATALLEKLRREKESLGSDKTGNMDDEKEKSISEEENKHVWARKNSAYFSKLVFSFTDRYAALTSSAEEANIVMLTEDQKNQLLSAFWVQAIQTDNTPFNYEAIGHSYSLTVISSRLKDSRNSNNIQFFQLPLSLRSVSLTSNGVLSPSCQRSIFTLATSMLAFAGKVCHITELFDVLRCFTSCNMDPYLRIGEDLQLYVRLQSDLGNYGSDSDQEIARSVLSDCRTKVGINDQRVLDVVACALCNLTEMDKDVLVKELTEMFTPEEVPLFGSNSAFDWANFHVQAFSDESLSFDEECSRTSSVDGGLHESPITNTGSSISKTTMPQSVPRVLGVGQLLESALHVAGQVAGASVSTSPLPYGTMTSQCEALGSGTRKKLSSWLVNGHDSTPDNPAPSLPSAQHFIIPKVNSCGFESSIRTTLEPCSAVKLPPASPFDNFLKAAYRAQ.

A disordered region spans residues 844-865 (SVDGGLHESPITNTGSSISKTT). Residues 853-865 (PITNTGSSISKTT) show a composition bias toward polar residues.

Expressed in root tips, and in the vascular bundles of leaf blades, leaf sheaths, and roots, especially in their sclerenchymatous cells.

The protein localises to the nucleus. The protein resides in the cytoplasm. Functions in regulating leaf rolling through abaxial side leaf cell differentiation. May be involved in the transdifferentiation process from mesophyll cells to sclerenchymatous cells. The protein is Protein SEMI-ROLLED LEAF 2 of Oryza sativa subsp. japonica (Rice).